The following is a 478-amino-acid chain: Zinc metalloproteinase/disintegrin (478 aa).

The N-terminal stretch at 1–20 is a signal peptide; that stretch reads MIQVLLVTICLAAFPYQGSS. Positions 21–188 are excised as a propeptide; sequence IILESGNVND…PIKKVSQLNL (168 aa). Positions 194–391 constitute a Peptidase M12B domain; that stretch reads RHVDIVVVVD…QNPQCILNKP (198 aa). Residues cysteine 207 and cysteine 248 are joined by a disulfide bond. An N-linked (GlcNAc...) (complex) asparagine glycan is attached at asparagine 279. 3 cysteine pairs are disulfide-bonded: cysteine 305–cysteine 386, cysteine 345–cysteine 370, and cysteine 347–cysteine 353. Histidine 330 serves as a coordination point for Zn(2+). The active site involves glutamate 331. Zn(2+) is bound by residues histidine 334 and histidine 340. The N-linked (GlcNAc...) (complex) asparagine glycan is linked to asparagine 369. The propeptide occupies 392–407; that stretch reads LRTVSIPVSGNEHLEA. Residues 397–478 enclose the Disintegrin domain; sequence IPVSGNEHLE…ADCPRYHSHA (82 aa). Intrachain disulfides connect cysteine 411-cysteine 426, cysteine 413-cysteine 421, cysteine 420-cysteine 443, cysteine 434-cysteine 440, cysteine 439-cysteine 464, and cysteine 452-cysteine 471. The short motif at 456–458 is the Cell attachment site element; it reads RGD. A propeptide spanning residues 476–478 is cleaved from the precursor; the sequence is SHA.

It belongs to the venom metalloproteinase (M12B) family. P-II subfamily. P-IIa sub-subfamily. As to quaternary structure, monomeric (disintegrin). The cofactor is Zn(2+). Glycans are composed of 4 GlcNAc, 3 Man, 2 Gal, 2 NeuAC and 1 Fuc residue. Expressed by the venom gland.

It is found in the secreted. Impairs hemostasis in the envenomed animal. In terms of biological role, inhibits platelet aggregation induced by ADP, thrombin, platelet-activating factor and collagen. Acts by inhibiting fibrinogen interaction with platelet receptors alpha-IIb/beta-3 (ITGA2B/ITGB3). In Calloselasma rhodostoma (Malayan pit viper), this protein is Zinc metalloproteinase/disintegrin.